A 460-amino-acid polypeptide reads, in one-letter code: ATP synthase subunit beta (460 aa).

ATP is bound at residue 150-157; it reads GGAGVGKT.

This sequence belongs to the ATPase alpha/beta chains family. As to quaternary structure, F-type ATPases have 2 components, CF(1) - the catalytic core - and CF(0) - the membrane proton channel. CF(1) has five subunits: alpha(3), beta(3), gamma(1), delta(1), epsilon(1). CF(0) has three main subunits: a(1), b(2) and c(9-12). The alpha and beta chains form an alternating ring which encloses part of the gamma chain. CF(1) is attached to CF(0) by a central stalk formed by the gamma and epsilon chains, while a peripheral stalk is formed by the delta and b chains.

Its subcellular location is the cell inner membrane. It catalyses the reaction ATP + H2O + 4 H(+)(in) = ADP + phosphate + 5 H(+)(out). Functionally, produces ATP from ADP in the presence of a proton gradient across the membrane. The catalytic sites are hosted primarily by the beta subunits. The protein is ATP synthase subunit beta of Serratia proteamaculans (strain 568).